A 112-amino-acid chain; its full sequence is Putative pterin-4-alpha-carbinolamine dehydratase (112 aa).

The protein belongs to the pterin-4-alpha-carbinolamine dehydratase family.

It carries out the reaction (4aS,6R)-4a-hydroxy-L-erythro-5,6,7,8-tetrahydrobiopterin = (6R)-L-erythro-6,7-dihydrobiopterin + H2O. The protein is Putative pterin-4-alpha-carbinolamine dehydratase of Shewanella sp. (strain ANA-3).